The sequence spans 250 residues: 5-oxoprolinase subunit A (250 aa).

Belongs to the LamB/PxpA family. As to quaternary structure, forms a complex composed of PxpA, PxpB and PxpC.

The enzyme catalyses 5-oxo-L-proline + ATP + 2 H2O = L-glutamate + ADP + phosphate + H(+). Functionally, catalyzes the cleavage of 5-oxoproline to form L-glutamate coupled to the hydrolysis of ATP to ADP and inorganic phosphate. The polypeptide is 5-oxoprolinase subunit A (Paraburkholderia phymatum (strain DSM 17167 / CIP 108236 / LMG 21445 / STM815) (Burkholderia phymatum)).